The sequence spans 311 residues: MNILTKIDDFVDQAGADKVGADHGPSEENGSSHPLFDNAPRSVSFNKLRKRLLRNVRQAFEDFGMLNGQKRWLVGLSGGKDSYGLLALLLDLKWRGLLPVELVACNLDQGQPNFPKHVLPEYLAKIGVAHRIEYRDTYSIVKEKVPSGGTYCSLCSRLRRGNLYRIAREEGCDALLLGHHREDILETFFMNFFHGGRLAGMPAKLLNDEGDLMVMRPLAYCAEEDMAKFAAAMEFPIIPCDLCGSQDGLQRNAMKDMLADIERRMPGRKDVMLRALAHVNPSHLLDPKLFDFSALAVTGASPEERREASPP.

Residues 18–38 (KVGADHGPSEENGSSHPLFDN) form a disordered region. The PP-loop motif motif lies at 77-82 (SGGKDS). The [4Fe-4S] cluster site is built by cysteine 152, cysteine 155, and cysteine 243.

This sequence belongs to the TtcA family. In terms of assembly, homodimer. It depends on Mg(2+) as a cofactor. Requires [4Fe-4S] cluster as cofactor.

The protein localises to the cytoplasm. It catalyses the reaction cytidine(32) in tRNA + S-sulfanyl-L-cysteinyl-[cysteine desulfurase] + AH2 + ATP = 2-thiocytidine(32) in tRNA + L-cysteinyl-[cysteine desulfurase] + A + AMP + diphosphate + H(+). Its pathway is tRNA modification. Catalyzes the ATP-dependent 2-thiolation of cytidine in position 32 of tRNA, to form 2-thiocytidine (s(2)C32). The sulfur atoms are provided by the cysteine/cysteine desulfurase (IscS) system. This Agrobacterium fabrum (strain C58 / ATCC 33970) (Agrobacterium tumefaciens (strain C58)) protein is tRNA-cytidine(32) 2-sulfurtransferase.